The sequence spans 132 residues: Insulin-like 3 (132 aa).

The signal sequence occupies residues 1 to 21; it reads MDRRPLTWALVLLGPALAIAL. A Pyrrolidone carboxylic acid modification is found at Q27. Intrachain disulfides connect C34/C117, C46/C130, and C116/C121. The propeptide at 67 to 104 is c peptide like; that stretch reads LLRWLEGQHLLHGLMASGDPVLVLAPQPLPQASRHHHH.

It belongs to the insulin family. As to quaternary structure, heterodimer of a B chain and an A chain linked by two disulfide bonds. 20% of B chains include an extra N-terminal pentapeptide. Expressed exclusively in Leydig cells of the testis.

The protein localises to the secreted. In terms of biological role, seems to play a role in testicular function. May be a trophic hormone with a role in testicular descent in fetal life. Is a ligand for LGR8 receptor. This Bos taurus (Bovine) protein is Insulin-like 3 (INSL3).